The following is a 1379-amino-acid chain: DNA-directed RNA polymerase subunit beta'' (1379 aa).

4 residues coordinate Zn(2+): cysteine 220, cysteine 293, cysteine 300, and cysteine 303.

The protein belongs to the RNA polymerase beta' chain family. RpoC2 subfamily. In terms of assembly, in plastids the minimal PEP RNA polymerase catalytic core is composed of four subunits: alpha, beta, beta', and beta''. When a (nuclear-encoded) sigma factor is associated with the core the holoenzyme is formed, which can initiate transcription. Requires Zn(2+) as cofactor.

The protein localises to the plastid. It localises to the chloroplast. The enzyme catalyses RNA(n) + a ribonucleoside 5'-triphosphate = RNA(n+1) + diphosphate. DNA-dependent RNA polymerase catalyzes the transcription of DNA into RNA using the four ribonucleoside triphosphates as substrates. The chain is DNA-directed RNA polymerase subunit beta'' from Nasturtium officinale (Watercress).